The sequence spans 312 residues: MKLISCNANRPLSDAIADYLDMRLTRSEVKTFADQEIFVRIDENVRGEDVFVIQSTSYPANDNLMQLLIMMDALRRASARRITAVIPYFGYARQDRKTDGRTPISAKLVANLISTAGADRVLTVDLHAGQIQGFFDIPTDNLFGGPVMVDDIKERYGKEKIIVVSPDVGGVVRARSLAKRLDDADLAIVDKRRPEAGKSEVMNIIGDVRGARCIMLDDMCDSGGTLANAAAALKEHGASSVSAYVTHGVLSGSAVERIEKSVLDELVMTDTIQPSEHALKSKNIRVLPISPLLGEAIRRIANEESVSKLFDR.

ATP contacts are provided by residues 34 to 36 and 93 to 94; these read DQE and RQ. Mg(2+) is bound by residues H127 and D167. The active site involves K191. D-ribose 5-phosphate is bound by residues R193, D217, and 221–225; that span reads DSGGT.

This sequence belongs to the ribose-phosphate pyrophosphokinase family. Class I subfamily. As to quaternary structure, homohexamer. The cofactor is Mg(2+).

The protein resides in the cytoplasm. The catalysed reaction is D-ribose 5-phosphate + ATP = 5-phospho-alpha-D-ribose 1-diphosphate + AMP + H(+). The protein operates within metabolic intermediate biosynthesis; 5-phospho-alpha-D-ribose 1-diphosphate biosynthesis; 5-phospho-alpha-D-ribose 1-diphosphate from D-ribose 5-phosphate (route I): step 1/1. Involved in the biosynthesis of the central metabolite phospho-alpha-D-ribosyl-1-pyrophosphate (PRPP) via the transfer of pyrophosphoryl group from ATP to 1-hydroxyl of ribose-5-phosphate (Rib-5-P). This Hyphomonas neptunium (strain ATCC 15444) protein is Ribose-phosphate pyrophosphokinase.